Consider the following 379-residue polypeptide: MNFTPALLALEDGSLFHGISIGAPGQTVGEVVFNTAMTGYQEILTDPSYARQIVTLTYPHIGNTGVNPEDEESAGVHAAGLVIRDLPPLVSSWRSRESLPDYLTRFGVVAIANIDTRRLTRILREKGAQNGCIMAGEIDEQAALAAARGFPGLKGMDLAKEVSTAEIYDWTEGTWQLGSGHAPAPASSPYKVVAYDFGVKRNILRMLVDRGCQVTVVPAQTPAAQVLAMQPDGVFLSNGPGDPEPCDYAISAIREIVDTGIPTYGICLGHQLLGLASGARTVKMKFGHHGANHPVQDLDSKRVMISSQNHGFAVDENTLPGNVKATHRSLFDGTLQGIARTDRPAFSFQGHPEASPGPHDVAPLFDRFIELMKPQGVRK.

The tract at residues 1–187 (MNFTPALLAL…GSGHAPAPAS (187 aa)) is CPSase. 3 residues coordinate L-glutamine: Ser48, Gly239, and Gly241. Residues 191–378 (KVVAYDFGVK…IELMKPQGVR (188 aa)) form the Glutamine amidotransferase type-1 domain. Cys267 acts as the Nucleophile in catalysis. 5 residues coordinate L-glutamine: Leu268, Gln271, Asn309, Gly311, and Phe312. Residues His351 and Glu353 contribute to the active site.

The protein belongs to the CarA family. Composed of two chains; the small (or glutamine) chain promotes the hydrolysis of glutamine to ammonia, which is used by the large (or ammonia) chain to synthesize carbamoyl phosphate. Tetramer of heterodimers (alpha,beta)4.

The enzyme catalyses hydrogencarbonate + L-glutamine + 2 ATP + H2O = carbamoyl phosphate + L-glutamate + 2 ADP + phosphate + 2 H(+). It carries out the reaction L-glutamine + H2O = L-glutamate + NH4(+). It functions in the pathway amino-acid biosynthesis; L-arginine biosynthesis; carbamoyl phosphate from bicarbonate: step 1/1. Its pathway is pyrimidine metabolism; UMP biosynthesis via de novo pathway; (S)-dihydroorotate from bicarbonate: step 1/3. In terms of biological role, small subunit of the glutamine-dependent carbamoyl phosphate synthetase (CPSase). CPSase catalyzes the formation of carbamoyl phosphate from the ammonia moiety of glutamine, carbonate, and phosphate donated by ATP, constituting the first step of 2 biosynthetic pathways, one leading to arginine and/or urea and the other to pyrimidine nucleotides. The small subunit (glutamine amidotransferase) binds and cleaves glutamine to supply the large subunit with the substrate ammonia. This chain is Carbamoyl phosphate synthase small chain, found in Thioalkalivibrio sulfidiphilus (strain HL-EbGR7).